A 184-amino-acid polypeptide reads, in one-letter code: Shikimate kinase (184 aa).

17–22 (GAGKTT) is an ATP binding site. Thr-21 contacts Mg(2+). The substrate site is built by Asp-39, Arg-63, and Gly-85. Residue Arg-123 coordinates ATP. Arg-142 contacts substrate.

It belongs to the shikimate kinase family. As to quaternary structure, monomer. Mg(2+) serves as cofactor.

The protein resides in the cytoplasm. It catalyses the reaction shikimate + ATP = 3-phosphoshikimate + ADP + H(+). It participates in metabolic intermediate biosynthesis; chorismate biosynthesis; chorismate from D-erythrose 4-phosphate and phosphoenolpyruvate: step 5/7. Catalyzes the specific phosphorylation of the 3-hydroxyl group of shikimic acid using ATP as a cosubstrate. This Burkholderia pseudomallei (strain 1710b) protein is Shikimate kinase.